The following is a 547-amino-acid chain: Cilia- and flagella- associated protein 210 (547 aa).

Residues 184–254 (KLNVEKAFKE…EIEMKKKQGK (71 aa)) adopt a coiled-coil conformation. The disordered stretch occupies residues 210 to 237 (KDHLKQIKEHEEEEERRRKEEEKDAEEI).

Microtubule inner protein component of sperm flagellar doublet microtubules. In terms of tissue distribution, expressed in trachea multiciliated cells.

It localises to the cytoplasm. It is found in the cytoskeleton. The protein resides in the cilium axoneme. Its subcellular location is the flagellum axoneme. Its function is as follows. Microtubule inner protein (MIP) part of the dynein-decorated doublet microtubules (DMTs) in cilia axoneme, which is required for motile cilia beating. This chain is Cilia- and flagella- associated protein 210 (CFAP210), found in Bos taurus (Bovine).